The following is a 251-amino-acid chain: B3 domain-containing protein At2g24670 (251 aa).

The tract at residues 48 to 111 (TTPSTVMESK…SSKTREPTPG (64 aa)) is disordered. Residues 56–70 (SKSHIHDHSLRESPT) are compositionally biased toward basic and acidic residues. The segment at residues 153–249 (VSQIVELEFL…TLYFALVPLY (97 aa)) is a DNA-binding region (TF-B3).

It localises to the nucleus. This chain is B3 domain-containing protein At2g24670, found in Arabidopsis thaliana (Mouse-ear cress).